Consider the following 464-residue polypeptide: Uronate isomerase (464 aa).

It belongs to the metallo-dependent hydrolases superfamily. Uronate isomerase family.

The catalysed reaction is D-glucuronate = D-fructuronate. The enzyme catalyses aldehydo-D-galacturonate = keto-D-tagaturonate. It functions in the pathway carbohydrate metabolism; pentose and glucuronate interconversion. The chain is Uronate isomerase from Caldicellulosiruptor saccharolyticus (strain ATCC 43494 / DSM 8903 / Tp8T 6331).